A 1020-amino-acid polypeptide reads, in one-letter code: MANLTRRQWLKVGLAVGGMVTFGLSYRDVAKRAIDGLLNGTSGKVTRDRIFGNALIPEAQAQTHWQQNPQQTIAMTQCFGCWTQCGIRARVNADGKVIRIAGNPYHPLSQEHPIDSSVPFSEAMEQLAGESGLDARSTACARGATLLESLYSPLRLLEPMKRVGKRGEGKWQRISFEQLIEEVVEGGDLFGEGHVDGLRAIHAPDTPIDAKHPSFGPKTNQLLVTNTSDEGRDAFLRRFALNSFGSKNFGAHGAYCGLAYRAGSGALMGDLDKNPHVKPDWENVEFALFMGTSPAQSGNPFKRQARQLASARLRENFQYVVVAPALPLSTVLADPRGRWQPVMPGSDSALAMGMIRWIMDNQRYNADYLAIPGVQAMQQAGEQSWTNATHLVIADELPTLAGQHLTLRHLTPDGEETPVVLNTDGELVDASTCRQARLFVTQYVTLADGQRVTVKSGLQRLKEAAEKLSLAQYSEQCGVPEAQIIALAETFTSHGRKAAVISHGGMMAGNGFYNAWSVMMLNALIGNLSLSGGVFVGGGKFNGVSDGPRYNMNSFAGKVKPSGLSIARSKTAYEASEEYRDKIAGGQSPYPAKAPWYPFVAGQLTELLTSALEGYPYPLKAWISNMSNPFYGVPGLRAVAEEKLKDPRRLPLFIAIDAFMNETTALADYIVPDTHNFESWGFTAPWGGVASKATTARWPVVAPATHRTADGQPVSMEAFCIAVAKRLHLPGFGDRAITDPQGNTFPLNRAEDFYLRVAANIAFMGKTPVALANQEDISLTGVSRILPAIQHTLKADEVGRVAFIYSRGGRFAPEDSGYTEQRLGNAWKKPLQIWNADVAAHRHAITGERFSGCPVWYPARLSDGRAIDDQFPIGQWPLKLISFKSNTMSSSTAVIPRLHHVKPANLVALNPQDGERYGLQHGDRVRIITPGGQVVAQISLLNGVMPGVIAIEHGYGHREMGATQHSLDGVPMPYDPQIRAGINLNDLGFADPTRTITNTWLDWVSGAAVRQGLPAKIERI.

The tat-type signal signal peptide spans 1-33 (MANLTRRQWLKVGLAVGGMVTFGLSYRDVAKRA). Residues 71 to 154 (QTIAMTQCFG…TLLESLYSPL (84 aa)) enclose the 4Fe-4S Mo/W bis-MGD-type domain. [4Fe-4S] cluster contacts are provided by cysteine 78, cysteine 81, cysteine 85, and cysteine 140.

This sequence belongs to the prokaryotic molybdopterin-containing oxidoreductase family. Probably composed of three subunits: TtrA, TtrB and TtrC. [4Fe-4S] cluster is required as a cofactor. Requires Mo-bis(molybdopterin guanine dinucleotide) as cofactor. In terms of processing, predicted to be exported by the Tat system. The position of the signal peptide cleavage has not been experimentally proven.

The protein localises to the periplasm. It localises to the cell inner membrane. In terms of biological role, part of a membrane-bound tetrathionate reductase that catalyzes the reduction of tetrathionate to thiosulfate. TtrA is the catalytic subunit. During mice infection, the ability to use tetrathionate as an electron acceptor is a growth advantage for S.typhimurium over the competing microbiota in the lumen of the inflamed gut. This chain is Tetrathionate reductase subunit A (ttrA), found in Salmonella typhimurium (strain LT2 / SGSC1412 / ATCC 700720).